Consider the following 770-residue polypeptide: Amyloid-beta precursor protein (770 aa).

Residues 1 to 17 form the signal peptide; that stretch reads MLPGLALLLLAAWTARA. Over 18–701 the chain is Extracellular; sequence LEVPTDGNAG…AEDVGSNKGA (684 aa). Residues 28–123 form a GFLD subdomain region; the sequence is LLAEPQIAMF…PYRCLVGEFV (96 aa). The E1 domain maps to 28-189; it reads LLAEPQIAMF…RGVEFVCCPL (162 aa). Disulfide bonds link Cys-38/Cys-62, Cys-73/Cys-117, Cys-98/Cys-105, Cys-133/Cys-187, Cys-144/Cys-174, and Cys-158/Cys-186. 96–110 contacts heparin; the sequence is NWCKRGRKQCKTHPH. The interval 131-189 is cuBD subdomain; it reads DKCKFLHQERMDVCETHLHWHTVAKETCSEKSTNLHDYGMLLPCGIDKFRGVEFVCCPL. Residues His-147, His-151, and Tyr-168 each coordinate Cu(2+). The segment at 181-188 is zinc-binding; that stretch reads GVEFVCCP. Zn(2+) is bound by residues Glu-183, Cys-186, and Cys-187. A compositionally biased stretch (acidic residues) spans 194–207; the sequence is DNVDSADAEEDDSD. Positions 194–284 are disordered; that stretch reads DNVDSADAEE…TTTTTTESVE (91 aa). Ser-198 bears the Phosphoserine; by CK2 mark. Ser-206 is modified (phosphoserine; by CK1). Tyr-217 and Tyr-262 each carry sulfotyrosine. A compositionally biased stretch (acidic residues) spans 228–264; it reads VAEEEEVAEVEEEEADDDEDDEDGDEVEEEAEEPYEE. The span at 268-281 shows a compositional bias: low complexity; it reads RTTSIATTTTTTTE. 3 cysteine pairs are disulfide-bonded: Cys-291–Cys-341, Cys-300–Cys-324, and Cys-316–Cys-337. Residues 291–341 enclose the BPTI/Kunitz inhibitor domain; the sequence is CSEQAETGPCRAMISRWYFDVTEGKCAPFFYGGCGGNRNNFDTEEYCMAVC. The residue at position 336 (Tyr-336) is a Sulfotyrosine. Residues 344–365 carry the OX-2 motif; the sequence is VMSQSLLKTTQEPLARDPVKLP. One can recognise an E2 domain in the interval 374 to 565; sequence AVDKYLETPG…EEIQDEVDEL (192 aa). The tract at residues 391-423 is heparin-binding; the sequence is FQKAKERLEAKHRERMSQVMREWEEAERQAKNL. Phosphoserine is present on Ser-441. The tract at residues 491-522 is heparin-binding; it reads FNMLKKYVRAEQKDRQHTLKHFEHVRMVDPKK. Tyr-497 is subject to Phosphotyrosine. Residues 523 to 540 are collagen-binding; sequence AAQIRSQVMTHLRVIYER. N-linked (GlcNAc...) asparagine glycans are attached at residues Asn-542 and Asn-571. Cu(2+) contacts are provided by His-677, Tyr-681, His-684, and His-685. Zn(2+) is bound by residues His-677, Tyr-681, His-684, and His-685. The interval 695-722 is interaction with PSEN1; that stretch reads VGSNKGAIIGLMVGGVVIATVIVITLVM. The chain crosses the membrane as a helical span at residues 702 to 722; that stretch reads IIGLMVGGVVIATVIVITLVM. Residues 723–770 lie on the Cytoplasmic side of the membrane; it reads LKKKQYTSIHHGVVEVDAAVTPEERHLSKMQQNGYENPTYKFFEQMQN. The Basolateral sorting signal signature appears at 724 to 734; it reads KKKQYTSIHHG. Thr-729 is subject to Phosphothreonine. Phosphoserine; by APP-kinase I is present on Ser-730. Residues 732 to 751 form an interaction with G(o)-alpha region; it reads HHGVVEVDAAVTPEERHLSK. Thr-743 carries the post-translational modification Phosphothreonine; by CDK5 and MAPK10. The required for the interaction with KIF5B and for anterograde transport in axons stretch occupies residues 756–770; it reads GYENPTYKFFEQMQN. Tyr-757 is modified (phosphotyrosine; by ABL1). Residues 757–762 carry the YENPXY motif; contains endocytosis signal motif; sequence YENPTY. Residue Lys-763 forms a Glycyl lysine isopeptide (Lys-Gly) (interchain with G-Cter in ubiquitin) linkage.

Belongs to the APP family. As to quaternary structure, binds, via its C-terminus, to the PID domain of several cytoplasmic proteins, including APBB family members, the APBA family, MAPK8IP1, SHC1 and NUMB and DAB1. Binding to DAB1 inhibits its serine phosphorylation. Interacts (via NPXY motif) with DAB2 (via PID domain); the interaction is impaired by tyrosine phosphorylation of the NPXY motif. Also interacts with GPCR-like protein BPP, APPBP1, IB1, KNS2 (via its TPR domains), APPBP2 (via BaSS) and DDB1. In vitro, it binds MAPT via the MT-binding domains. Associates with microtubules in the presence of ATP and in a kinesin-dependent manner. Interacts, through a C-terminal domain, with GNAO1. Amyloid-beta protein 42 binds CHRNA7 in hippocampal neurons. Amyloid-beta associates with HADH2. Interacts with CPEB1, ANKS1B and AGER. Interacts with ITM2B. Interacts with ITM2C. Interacts with IDE. Can form homodimers; dimerization is enhanced in the presence of Cu(2+) ions. Can form homodimers; this is promoted by heparin binding. Amyloid-beta protein 40 interacts with S100A9. CTF-alpha product of APP interacts with GSAP. Interacts with SORL1 (via N-terminal ectodomain); this interaction retains APP in the trans-Golgi network and reduces processing into soluble APP-alpha and amyloid-beta peptides. The C99 fragment also interacts with SORL1. Interacts with PLD3. Interacts with VDAC1. Interacts with NSG1; could regulate APP processing. Amyloid-beta protein 42 interacts with FPR2. Interacts (via transmembrane region) with PSEN1; the interaction is direct. Interacts with LRRK2. Interacts (via cytoplasmic domain) with KIF5B. Interacts (via C-terminus) with APBB2/FE65L1 (via C-terminus). Interacts (via intracellular domain) with APBB3. Post-translationally, proteolytically processed under normal cellular conditions. Cleavage either by alpha-secretase, beta-secretase or theta-secretase leads to generation and extracellular release of soluble APP peptides, S-APP-alpha and S-APP-beta, and the retention of corresponding membrane-anchored C-terminal fragments, C80, C83 and C99. Subsequent processing of C80 and C83 by gamma-secretase yields P3 peptides. This is the major secretory pathway and is non-amyloidogenic. Alternatively, presenilin/nicastrin-mediated gamma-secretase processing of C99 releases the amyloid-beta proteins, amyloid-beta protein 40 and amyloid-beta protein 42, major components of amyloid plaques, and the cytotoxic C-terminal fragments, gamma-CTF(50), gamma-CTF(57) and gamma-CTF(59). PSEN1 cleavage is more efficient with C83 than with C99 as substrate (in vitro). Amyloid-beta protein 40 and Amyloid-beta protein 42 are cleaved by ACE. Many other minor amyloid-beta peptides, amyloid-beta 1-X peptides, are found in cerebral spinal fluid (CSF) including the amyloid-beta X-15 peptides, produced from the cleavage by alpha-secretase. Proteolytically cleaved by caspases during neuronal apoptosis. Cleavage at Asp-739 by either caspase-3, -8 or -9 results in the production of the neurotoxic C31 peptide and the increased production of amyloid-beta peptides. In terms of processing, N- and O-glycosylated. Post-translationally, phosphorylation in the C-terminal on tyrosine, threonine and serine residues is neuron-specific. Phosphorylation can affect APP processing, neuronal differentiation and interaction with other proteins. Phosphorylated on Thr-743 in neuronal cells by Cdc5 kinase and Mapk10, in dividing cells by Cdc2 kinase in a cell-cycle dependent manner with maximal levels at the G2/M phase and, in vitro, by GSK-3-beta. The Thr-743 phosphorylated form causes a conformational change which reduces binding of Fe65 family members. In dopaminergic (DA) neurons, phosphorylation on Thr-743 by LRKK2 promotes the production and the nuclear translocation of the APP intracellular domain (AICD) which induces DA neuron apoptosis. Phosphorylation on Tyr-757 is required for SHC binding. Phosphorylated in the extracellular domain by casein kinases on both soluble and membrane-bound APP. This phosphorylation is inhibited by heparin. Trophic-factor deprivation triggers the cleavage of surface APP by beta-secretase to release sAPP-beta which is further cleaved to release an N-terminal fragment of APP (N-APP). In terms of processing, amyloid-beta peptides are degraded by IDE. Post-translationally, sulfated on tyrosine residues.

The protein localises to the cell membrane. The protein resides in the membrane. Its subcellular location is the perikaryon. It localises to the cell projection. It is found in the growth cone. The protein localises to the clathrin-coated pit. The protein resides in the early endosome. Its subcellular location is the cytoplasmic vesicle. It localises to the endoplasmic reticulum. It is found in the golgi apparatus. The protein localises to the secreted. The protein resides in the cell surface. Its subcellular location is the nucleus. It localises to the cytoplasm. Its function is as follows. Functions as a cell surface receptor and performs physiological functions on the surface of neurons relevant to neurite growth, neuronal adhesion and axonogenesis. Interaction between APP molecules on neighboring cells promotes synaptogenesis. Involved in cell mobility and transcription regulation through protein-protein interactions. Can promote transcription activation through binding to APBB1-KAT5 and inhibit Notch signaling through interaction with Numb. Couples to apoptosis-inducing pathways such as those mediated by G(o) and JIP. Inhibits G(o)-alpha ATPase activity. Acts as a kinesin I membrane receptor, mediating the axonal transport of beta-secretase and presenilin 1. By acting as a kinesin I membrane receptor, plays a role in axonal anterograde transport of cargo towards synapses in axons. May be involved in copper homeostasis/oxidative stress through copper ion reduction. In vitro, copper-metallated APP induces neuronal death directly or is potentiated through Cu(2+)-mediated low-density lipoprotein oxidation. Can regulate neurite outgrowth through binding to components of the extracellular matrix such as heparin and collagen I and IV. Induces a AGER-dependent pathway that involves activation of p38 MAPK, resulting in internalization of amyloid-beta peptide and mitochondrial dysfunction in cultured cortical neurons. Provides Cu(2+) ions for GPC1 which are required for release of nitric oxide (NO) and subsequent degradation of the heparan sulfate chains on GPC1. Amyloid-beta peptides are lipophilic metal chelators with metal-reducing activity. Binds transient metals such as copper, zinc and iron. Functionally, the gamma-CTF peptides as well as the caspase-cleaved peptides, including C31, are potent enhancers of neuronal apoptosis. The sequence is that of Amyloid-beta precursor protein from Pan troglodytes (Chimpanzee).